The chain runs to 152 residues: Nucleoside diphosphate kinase (152 aa).

Positions 12, 60, 88, 94, 105, and 115 each coordinate ATP. Catalysis depends on H118, which acts as the Pros-phosphohistidine intermediate.

Belongs to the NDK family. As to quaternary structure, homotrimer. The cofactor is Mg(2+).

It carries out the reaction a 2'-deoxyribonucleoside 5'-diphosphate + ATP = a 2'-deoxyribonucleoside 5'-triphosphate + ADP. The enzyme catalyses a ribonucleoside 5'-diphosphate + ATP = a ribonucleoside 5'-triphosphate + ADP. Major role in the synthesis of nucleoside triphosphates other than ATP. The ATP gamma phosphate is transferred to the NDP beta phosphate via a ping-pong mechanism, using a phosphorylated active-site intermediate. The chain is Nucleoside diphosphate kinase (ndk-1) from Neurospora crassa (strain ATCC 24698 / 74-OR23-1A / CBS 708.71 / DSM 1257 / FGSC 987).